Consider the following 152-residue polypeptide: MTTQIELKILDARIGTEYPLPAYATPGSAGMDLRALLDAPLTLAPGDTTLVPTGLAIHIQDPGLCATILPRSGLGHKHGIVLGNLVGLIDSDYQGQLMVSVWNRGNDNFTMQPGERIAQLVIMPVVQASFQLVDEFNQSERGEGGFGSSGRQ.

Substrate contacts are provided by residues 71–73 (RSG), N84, 88–90 (LID), and M98.

This sequence belongs to the dUTPase family. Mg(2+) is required as a cofactor.

The catalysed reaction is dUTP + H2O = dUMP + diphosphate + H(+). Its pathway is pyrimidine metabolism; dUMP biosynthesis; dUMP from dCTP (dUTP route): step 2/2. In terms of biological role, this enzyme is involved in nucleotide metabolism: it produces dUMP, the immediate precursor of thymidine nucleotides and it decreases the intracellular concentration of dUTP so that uracil cannot be incorporated into DNA. The protein is Deoxyuridine 5'-triphosphate nucleotidohydrolase of Aeromonas hydrophila subsp. hydrophila (strain ATCC 7966 / DSM 30187 / BCRC 13018 / CCUG 14551 / JCM 1027 / KCTC 2358 / NCIMB 9240 / NCTC 8049).